The primary structure comprises 156 residues: Oxidized purine nucleoside triphosphate hydrolase (156 aa).

The Nudix hydrolase domain maps to 3–132 (TSRLYTLVLV…WFPLLLQKKK (130 aa)). Residue T8 participates in 2-oxo-dATP binding. K23 is a binding site for 8-oxo-dGTP. Residues N33 and 35–38 (FGGK) contribute to the 2-oxo-dATP site. G36, E52, E55, E56, and E100 together coordinate Mg(2+). The Nudix box motif lies at 37–58 (GKVQEGETIEDGAKRELREESG). 117–120 (WPDD) provides a ligand contact to 2-oxo-dATP.

This sequence belongs to the Nudix hydrolase family. In terms of assembly, monomer. It depends on Mg(2+) as a cofactor.

The protein resides in the cytoplasm. It localises to the nucleus. It is found in the nucleus membrane. The protein localises to the cytoplasmic vesicle. Its subcellular location is the secretory vesicle. The protein resides in the acrosome. It carries out the reaction 2-oxo-dATP + H2O = 2-oxo-dAMP + diphosphate + H(+). The enzyme catalyses 2-oxo-ATP + H2O = 2-oxo-AMP + diphosphate + H(+). It catalyses the reaction 8-oxo-dGTP + H2O = 8-oxo-dGMP + diphosphate + H(+). The catalysed reaction is 8-oxo-dATP + H2O = 8-oxo-dAMP + diphosphate + H(+). It carries out the reaction O(6)-methyl-dGTP + H2O = O(6)-methyl-dGMP + diphosphate + H(+). The enzyme catalyses N(6)-methyl-dATP + H2O = N(6)-methyl-dAMP + diphosphate + H(+). It catalyses the reaction N(6)-methyl-ATP + H2O = N(6)-methyl-AMP + diphosphate + H(+). Functionally, oxidized purine nucleoside triphosphate hydrolase which is a prominent sanitizer of the oxidized nucleotide pool. Catalyzes the hydrolysis of 2-oxo-dATP (2-hydroxy-dATP) into 2-oxo-dAMP. Also has a significant hydrolase activity toward 2-oxo-ATP, 8-oxo-dGTP and 8-oxo-dATP. Through the hydrolysis of oxidized purine nucleoside triphosphates, prevents their incorporation into DNA and the subsequent transversions A:T to C:G and G:C to T:A. Also catalyzes the hydrolysis of methylated purine nucleoside triphosphate preventing their integration into DNA. Through this antimutagenic activity protects cells from oxidative stress. The chain is Oxidized purine nucleoside triphosphate hydrolase (NUDT1) from Canis lupus familiaris (Dog).